The sequence spans 32 residues: Cruzioseptin-9 (32 aa).

Position 29 is a glutamine amide (Gln-29). Residues 31–32 (EQ) constitute a propeptide that is removed on maturation.

In terms of tissue distribution, expressed by the skin glands.

Its subcellular location is the secreted. Has antimicrobial activity. The chain is Cruzioseptin-9 from Cruziohyla calcarifer (Splendid leaf frog).